The primary structure comprises 148 residues: Large ribosomal subunit protein bL9 (148 aa).

It belongs to the bacterial ribosomal protein bL9 family.

Functionally, binds to the 23S rRNA. The sequence is that of Large ribosomal subunit protein bL9 from Thermus thermophilus.